We begin with the raw amino-acid sequence, 387 residues long: MKAVHFGAGNIGRGFVGLLLHNAGYEVVFADVAEGLIAQLADADSYAVHEVGESPAVQTVDNFRALNSNTQEAELITEIATADIVTTAVGPHILKFVAPVIARGIAARGAGMAPLQVMACENAINATDVLAREVASRPEAAGGALDGQAVFANTAVDRIVPNQEAGQGLDVTVESFYEWVIDRTAFAGSEPEIPGATFVDELAPYIERKLFTVNTGHASAAYFGFEAGLEKISDAMADQDVAEDVRAVLEETKQLLVAKHGFSNEAQEAYVQKILVRFTNPHLPDTVNRVGRAPLRKLSRHERFIGPAAELAERGVVPEALLGAISAALRFTDPADAEATELAGILASGSAADATARITGLDPDHPLFNAVSTLVEERQAELAATSA.

3–14 (AVHFGAGNIGRG) is an NAD(+) binding site.

This sequence belongs to the mannitol dehydrogenase family.

It carries out the reaction D-mannitol 1-phosphate + NAD(+) = beta-D-fructose 6-phosphate + NADH + H(+). The sequence is that of Mannitol-1-phosphate 5-dehydrogenase from Pseudarthrobacter chlorophenolicus (strain ATCC 700700 / DSM 12829 / CIP 107037 / JCM 12360 / KCTC 9906 / NCIMB 13794 / A6) (Arthrobacter chlorophenolicus).